The primary structure comprises 182 residues: ATP synthase subunit delta, organellar chromatophore (182 aa).

This sequence belongs to the ATPase delta chain family. As to quaternary structure, F-type ATPases have 2 components, F(1) - the catalytic core - and F(0) - the membrane proton channel. F(1) has five subunits: alpha(3), beta(3), gamma(1), delta(1), epsilon(1). CF(0) has four main subunits: a(1), b(1), b'(1) and c(10-14). The alpha and beta chains form an alternating ring which encloses part of the gamma chain. F(1) is attached to F(0) by a central stalk formed by the gamma and epsilon chains, while a peripheral stalk is formed by the delta, b and b' chains.

The protein localises to the plastid. It localises to the organellar chromatophore thylakoid membrane. In terms of biological role, f(1)F(0) ATP synthase produces ATP from ADP in the presence of a proton or sodium gradient. F-type ATPases consist of two structural domains, F(1) containing the extramembraneous catalytic core and F(0) containing the membrane proton channel, linked together by a central stalk and a peripheral stalk. During catalysis, ATP synthesis in the catalytic domain of F(1) is coupled via a rotary mechanism of the central stalk subunits to proton translocation. This protein is part of the stalk that links CF(0) to CF(1). It either transmits conformational changes from CF(0) to CF(1) or is implicated in proton conduction. The polypeptide is ATP synthase subunit delta, organellar chromatophore (Paulinella chromatophora).